The following is a 338-amino-acid chain: Ketol-acid reductoisomerase (NADP(+)) (338 aa).

Residues M1–T181 form the KARI N-terminal Rossmann domain. Residues Y24–Q27, R47, and S52 contribute to the NADP(+) site. Residue H107 is part of the active site. Position 133 (G133) interacts with NADP(+). Residues N182 to I327 enclose the KARI C-terminal knotted domain. Residues D190, E194, E226, and E230 each coordinate Mg(2+). S251 contacts substrate.

This sequence belongs to the ketol-acid reductoisomerase family. The cofactor is Mg(2+).

It carries out the reaction (2R)-2,3-dihydroxy-3-methylbutanoate + NADP(+) = (2S)-2-acetolactate + NADPH + H(+). The catalysed reaction is (2R,3R)-2,3-dihydroxy-3-methylpentanoate + NADP(+) = (S)-2-ethyl-2-hydroxy-3-oxobutanoate + NADPH + H(+). Its pathway is amino-acid biosynthesis; L-isoleucine biosynthesis; L-isoleucine from 2-oxobutanoate: step 2/4. It participates in amino-acid biosynthesis; L-valine biosynthesis; L-valine from pyruvate: step 2/4. Involved in the biosynthesis of branched-chain amino acids (BCAA). Catalyzes an alkyl-migration followed by a ketol-acid reduction of (S)-2-acetolactate (S2AL) to yield (R)-2,3-dihydroxy-isovalerate. In the isomerase reaction, S2AL is rearranged via a Mg-dependent methyl migration to produce 3-hydroxy-3-methyl-2-ketobutyrate (HMKB). In the reductase reaction, this 2-ketoacid undergoes a metal-dependent reduction by NADPH to yield (R)-2,3-dihydroxy-isovalerate. This Cupriavidus taiwanensis (strain DSM 17343 / BCRC 17206 / CCUG 44338 / CIP 107171 / LMG 19424 / R1) (Ralstonia taiwanensis (strain LMG 19424)) protein is Ketol-acid reductoisomerase (NADP(+)).